The primary structure comprises 632 residues: Probable potassium transport system protein Kup (632 aa).

The next 12 helical transmembrane spans lie at 20–40 (LLVAAVGVVYGDIGTSPLYTL), 60–80 (ILSLILWSLLWVVSFKYVMFI), 111–131 (LMVICGLIGASLFYGDSMITP), 146–166 (FDGIDHWVVPISLVVLVALFL), 178–198 (LFGPIMVTWFVVLAALGVHGI), 216–236 (FFIVHPGMGVAILGAVVLALT), 257–277 (WFALVLPALVLNYFGQGAILL), 289–309 (LLAPGWALLPLVGLATMATVI), 347–367 (IYIAAVNWTLMVGVVLLVIGF), 379–399 (VAVTGTMLMTTILVSAVMLLL), 404–424 (PVLAVPILIGFLLVDGLFFAA), and 429–449 (IVQGGAFPVLAGGVLFLLMST).

It belongs to the HAK/KUP transporter (TC 2.A.72) family.

It localises to the cell inner membrane. The catalysed reaction is K(+)(in) + H(+)(in) = K(+)(out) + H(+)(out). Its function is as follows. Transport of potassium into the cell. Likely operates as a K(+):H(+) symporter. This chain is Probable potassium transport system protein Kup, found in Pseudomonas putida (strain W619).